The primary structure comprises 34 residues: uncharacterized protein (34 aa).

The span at 1 to 12 (MFSHFEVSENRP) shows a compositional bias: basic and acidic residues. The interval 1–21 (MFSHFEVSENRPRKQPRRKRI) is disordered.

This is an uncharacterized protein from Saccharomyces cerevisiae (strain ATCC 204508 / S288c) (Baker's yeast).